Consider the following 641-residue polypeptide: Chaperone protein DnaK (641 aa).

Threonine 200 is subject to Phosphothreonine; by autocatalysis. Positions 606–623 (AEQGGNADAASGNAQASK) are enriched in low complexity. Residues 606–628 (AEQGGNADAASGNAQASKAADDV) are disordered.

Belongs to the heat shock protein 70 family.

Functionally, acts as a chaperone. This chain is Chaperone protein DnaK, found in Xanthomonas axonopodis pv. citri (strain 306).